The primary structure comprises 232 residues: Clarin-1 (232 aa).

The chain crosses the membrane as a helical span at residues 8 to 28 (IIFCMAGVLSFLCALGVVTAV). An N-linked (GlcNAc...) asparagine glycan is attached at Asn48. Transmembrane regions (helical) follow at residues 101-121 (IILFSMILVVLTMVGTAFFMY) and 135-155 (LGLYLVSFISGSCGCLVMILF). N-linked (GlcNAc...) asparagine glycosylation occurs at Asn184. Residues 186 to 206 (TTSFWVVFICFFVHFLNGLLI) traverse the membrane as a helical segment.

This sequence belongs to the clarin family.

It localises to the cell membrane. Its function is as follows. May have a role in the excitatory ribbon synapse junctions between hair cells and cochlear ganglion cells and presumably also in analogous synapses within the retina. The protein is Clarin-1 (Clrn1) of Mus musculus (Mouse).